Here is a 180-residue protein sequence, read N- to C-terminus: ATP-dependent protease subunit HslV (180 aa).

Residue Thr-5 is part of the active site. Na(+) is bound by residues Gly-165, Cys-168, and Thr-171.

Belongs to the peptidase T1B family. HslV subfamily. As to quaternary structure, a double ring-shaped homohexamer of HslV is capped on each side by a ring-shaped HslU homohexamer. The assembly of the HslU/HslV complex is dependent on binding of ATP.

Its subcellular location is the cytoplasm. It catalyses the reaction ATP-dependent cleavage of peptide bonds with broad specificity.. Allosterically activated by HslU binding. Its function is as follows. Protease subunit of a proteasome-like degradation complex believed to be a general protein degrading machinery. This chain is ATP-dependent protease subunit HslV, found in Helicobacter pylori (strain P12).